The following is a 434-amino-acid chain: Tyrosine-protein phosphatase non-receptor type 1 (434 aa).

One can recognise a Tyrosine-protein phosphatase domain in the interval 3–277 (IEKEFHRLDQ…RFSYLAVIEG (275 aa)). Residue S50 is modified to Phosphoserine. Substrate is bound by residues D181, 215–221 (CSAGIGR), and Q262. C215 serves as the catalytic Phosphocysteine intermediate. Positions 291–319 (WKELSNEDLDPPPEHTPPPPRPPKRTSEM) are disordered.

The protein belongs to the protein-tyrosine phosphatase family. Non-receptor class 1 subfamily. In terms of assembly, interacts with EPHA3 (phosphorylated); dephosphorylates EPHA3 and may regulate its trafficking and function. Interacts with MET. Interacts with NCK1. Phosphorylated on serine and threonine residues near the N-terminus by casein kinase II (CK2).

It localises to the endoplasmic reticulum membrane. The enzyme catalyses O-phospho-L-tyrosyl-[protein] + H2O = L-tyrosyl-[protein] + phosphate. May play an important role in CKII- and p60c-src-induced signal transduction cascades. May regulate the EFNA5-EPHA3 signaling pathway which modulates cell reorganization and cell-cell repulsion. May also regulate the hepatocyte growth factor receptor signaling pathway through dephosphorylation of MET. In Gallus gallus (Chicken), this protein is Tyrosine-protein phosphatase non-receptor type 1 (PTPN1).